The primary structure comprises 496 residues: Probable cytosol aminopeptidase (496 aa).

2 residues coordinate Mn(2+): Lys251 and Asp256. Lys263 is a catalytic residue. The Mn(2+) site is built by Asp274, Asp333, and Glu335. The active site involves Arg337.

This sequence belongs to the peptidase M17 family. The cofactor is Mn(2+).

It localises to the cytoplasm. It carries out the reaction Release of an N-terminal amino acid, Xaa-|-Yaa-, in which Xaa is preferably Leu, but may be other amino acids including Pro although not Arg or Lys, and Yaa may be Pro. Amino acid amides and methyl esters are also readily hydrolyzed, but rates on arylamides are exceedingly low.. It catalyses the reaction Release of an N-terminal amino acid, preferentially leucine, but not glutamic or aspartic acids.. In terms of biological role, presumably involved in the processing and regular turnover of intracellular proteins. Catalyzes the removal of unsubstituted N-terminal amino acids from various peptides. This Acidovorax ebreus (strain TPSY) (Diaphorobacter sp. (strain TPSY)) protein is Probable cytosol aminopeptidase.